A 590-amino-acid chain; its full sequence is L-fucose isomerase (590 aa).

Catalysis depends on proton acceptor residues Glu337 and Asp361. Positions 337, 361, and 528 each coordinate Mn(2+).

This sequence belongs to the L-fucose isomerase family. It depends on Mn(2+) as a cofactor.

It localises to the cytoplasm. It catalyses the reaction L-fucose = L-fuculose. The protein operates within carbohydrate degradation; L-fucose degradation; L-lactaldehyde and glycerone phosphate from L-fucose: step 1/3. Functionally, converts the aldose L-fucose into the corresponding ketose L-fuculose. The chain is L-fucose isomerase from Bacteroides fragilis (strain ATCC 25285 / DSM 2151 / CCUG 4856 / JCM 11019 / LMG 10263 / NCTC 9343 / Onslow / VPI 2553 / EN-2).